A 244-amino-acid polypeptide reads, in one-letter code: Large ribosomal subunit protein uL3 (244 aa).

Residues 215–244 (KKPPRERRGFAGSSTVDPLKASKRAVAKKK) form a disordered region. A compositionally biased stretch (basic residues) spans 235-244 (ASKRAVAKKK).

The protein belongs to the universal ribosomal protein uL3 family. As to quaternary structure, part of the 50S ribosomal subunit. Forms a cluster with proteins L14 and L19.

One of the primary rRNA binding proteins, it binds directly near the 3'-end of the 23S rRNA, where it nucleates assembly of the 50S subunit. The protein is Large ribosomal subunit protein uL3 of Koribacter versatilis (strain Ellin345).